The following is an 83-amino-acid chain: Apolipoprotein C-I (83 aa).

A signal peptide spans methionine 1–glycine 26.

It belongs to the apolipoprotein C1 family. As to expression, synthesized mainly in liver and to a minor degree in intestine. Also found in the lung and spleen.

It is found in the secreted. Inhibitor of lipoprotein binding to the low density lipoprotein (LDL) receptor, LDL receptor-related protein, and very low density lipoprotein (VLDL) receptor. Associates with high density lipoproteins (HDL) and the triacylglycerol-rich lipoproteins in the plasma and makes up about 10% of the protein of the VLDL and 2% of that of HDL. Appears to interfere directly with fatty acid uptake and is also the major plasma inhibitor of cholesteryl ester transfer protein (CETP). Binds free fatty acids and reduces their intracellular esterification. Modulates the interaction of APOE with beta-migrating VLDL and inhibits binding of beta-VLDL to the LDL receptor-related protein. The sequence is that of Apolipoprotein C-I (APOC1) from Homo sapiens (Human).